Here is a 146-residue protein sequence, read N- to C-terminus: MQVILLEPGRLGKTGDVVNVKPGYARNWLIPQGIAAPATASNMKTLEAQVRARKKQQEREKAQAEDLASRLNGVAVELSVRAGEGKIYGAVTHADVADALDKLGFDVDRRRIEMPKTVKEIGEYDIAYRAHPEVTIPMKLVVHAQK.

It belongs to the bacterial ribosomal protein bL9 family.

In terms of biological role, binds to the 23S rRNA. The protein is Large ribosomal subunit protein bL9 of Deinococcus geothermalis (strain DSM 11300 / CIP 105573 / AG-3a).